The primary structure comprises 484 residues: F-box/LRR-repeat protein At3g59210 (484 aa).

Positions lysine 6–leucine 54 constitute an F-box domain. 5 LRR repeats span residues lysine 144–serine 170, valine 172–asparagine 197, serine 205–threonine 234, threonine 303–serine 334, and histidine 335–glycine 360.

The polypeptide is F-box/LRR-repeat protein At3g59210 (Arabidopsis thaliana (Mouse-ear cress)).